Consider the following 835-residue polypeptide: Ubiquitin carboxyl-terminal hydrolase 26 (835 aa).

The segment at 102–128 is disordered; sequence SQGSIRPARSDERCGEPSTSAQELNGS. Over residues 118-128 the composition is skewed to polar residues; that stretch reads PSTSAQELNGS. A USP domain is found at 286-816; sequence QGLPNVGNTC…TGYVFFYMHN (531 aa). Cys-295 acts as the Nucleophile in catalysis. A disordered region spans residues 597 to 747; sequence NRESEAQSGK…TRKVDPTKLN (151 aa). Basic and acidic residues-rich tracts occupy residues 634 to 652 and 669 to 679; these read LTKE…RPSD and KCNEGRSDKQI. The span at 683–708 shows a compositional bias: polar residues; sequence ALTQSRPKPISQEQTENLGKTTLSHT. Positions 709–725 are enriched in low complexity; sequence QDSSQSSQSSSDSSKSS. A compositionally biased stretch (basic and acidic residues) spans 726 to 747; sequence RCSDDLDKKAKPTRKVDPTKLN. Catalysis depends on His-771, which acts as the Proton acceptor.

The protein belongs to the peptidase C19 family. As to quaternary structure, interacts with RING1.

It localises to the nucleus. Its subcellular location is the cytoplasm. The protein localises to the cytoskeleton. It is found in the flagellum axoneme. The enzyme catalyses Thiol-dependent hydrolysis of ester, thioester, amide, peptide and isopeptide bonds formed by the C-terminal Gly of ubiquitin (a 76-residue protein attached to proteins as an intracellular targeting signal).. Its function is as follows. Deubiquitinase regulating several biological processes through the deubiquitination of components of these processes. Involved in somatic cell reprogramming through the 'Lys-48'-linked deubiquitination and stabilization of CBX4 and CBX6, two components of the polycomb-repressive complex 1 (PRC1). Also deubiquitinates and probably stabilizes the androgen receptor (AR), regulating the androgen receptor signaling pathway. May play a role in spermatogenesis. In Mus musculus (Mouse), this protein is Ubiquitin carboxyl-terminal hydrolase 26.